The chain runs to 124 residues: Large ribosomal subunit protein bL12 (124 aa).

Belongs to the bacterial ribosomal protein bL12 family. In terms of assembly, homodimer. Part of the ribosomal stalk of the 50S ribosomal subunit. Forms a multimeric L10(L12)X complex, where L10 forms an elongated spine to which 2 to 4 L12 dimers bind in a sequential fashion. Binds GTP-bound translation factors.

Forms part of the ribosomal stalk which helps the ribosome interact with GTP-bound translation factors. Is thus essential for accurate translation. This Burkholderia mallei (strain NCTC 10247) protein is Large ribosomal subunit protein bL12.